A 557-amino-acid polypeptide reads, in one-letter code: Formate--tetrahydrofolate ligase (557 aa).

ATP is bound at residue 65-72; it reads TPAGEGKT.

Belongs to the formate--tetrahydrofolate ligase family. As to quaternary structure, homotetramer.

It carries out the reaction (6S)-5,6,7,8-tetrahydrofolate + formate + ATP = (6R)-10-formyltetrahydrofolate + ADP + phosphate. It participates in one-carbon metabolism; tetrahydrofolate interconversion. This chain is Formate--tetrahydrofolate ligase (fhs), found in Methylorubrum extorquens (strain ATCC 14718 / DSM 1338 / JCM 2805 / NCIMB 9133 / AM1) (Methylobacterium extorquens).